Reading from the N-terminus, the 924-residue chain is DNA polymerase (924 aa).

Residues 235-386 (YPMSQQPKIV…DDCDVTFRLS (152 aa)) form the 3'-5' exonuclease domain.

It belongs to the DNA polymerase type-A family.

The enzyme catalyses DNA(n) + a 2'-deoxyribonucleoside 5'-triphosphate = DNA(n+1) + diphosphate. Replicates viral genomic DNA. This polymerase possesses two enzymatic activities: DNA synthesis (polymerase) and an exonucleolytic activity that degrades single-stranded DNA in the 3'-5' direction. This chain is DNA polymerase (31), found in Bacillus phage SP01 (Bacteriophage SP01).